A 151-amino-acid chain; its full sequence is Small heat shock protein HspD (151 aa).

Positions 28 to 138 (RATEDNYPPY…KPRRIAINGA (111 aa)) constitute a sHSP domain.

This sequence belongs to the small heat shock protein (HSP20) family.

This Bradyrhizobium diazoefficiens (strain JCM 10833 / BCRC 13528 / IAM 13628 / NBRC 14792 / USDA 110) protein is Small heat shock protein HspD (hspD).